The following is a 340-amino-acid chain: Phosphoribosylformylglycinamidine cyclo-ligase (340 aa).

The protein belongs to the AIR synthase family.

The protein resides in the cytoplasm. It catalyses the reaction 2-formamido-N(1)-(5-O-phospho-beta-D-ribosyl)acetamidine + ATP = 5-amino-1-(5-phospho-beta-D-ribosyl)imidazole + ADP + phosphate + H(+). It functions in the pathway purine metabolism; IMP biosynthesis via de novo pathway; 5-amino-1-(5-phospho-D-ribosyl)imidazole from N(2)-formyl-N(1)-(5-phospho-D-ribosyl)glycinamide: step 2/2. This chain is Phosphoribosylformylglycinamidine cyclo-ligase, found in Crocosphaera subtropica (strain ATCC 51142 / BH68) (Cyanothece sp. (strain ATCC 51142)).